The following is a 136-amino-acid chain: Large ribosomal subunit protein uL16c (136 aa).

This sequence belongs to the universal ribosomal protein uL16 family. Part of the 50S ribosomal subunit.

It localises to the plastid. Its subcellular location is the chloroplast. This chain is Large ribosomal subunit protein uL16c, found in Phaseolus angularis (Azuki bean).